The sequence spans 184 residues: Ribosome maturation factor RimP (184 aa).

Belongs to the RimP family.

Its subcellular location is the cytoplasm. Functionally, required for maturation of 30S ribosomal subunits. The sequence is that of Ribosome maturation factor RimP from Zymomonas mobilis subsp. mobilis (strain ATCC 31821 / ZM4 / CP4).